The sequence spans 1164 residues: DNA-directed RNA polymerase 133 kDa polypeptide (1164 aa).

It belongs to the RNA polymerase beta chain family. The DNA-dependent RNA polymerase used for intermediate and late genes expression consists of eight subunits 147 kDa, 133 kDa, 35 kDa, 30 kDa, 22 kDa, 19 kDa, 18 kDa and 7 kDa totalling more than 500 kDa in mass. The same holoenzyme, with the addition of the transcription-specificity factor RAP94, is used for early gene expression.

The protein localises to the virion. The catalysed reaction is RNA(n) + a ribonucleoside 5'-triphosphate = RNA(n+1) + diphosphate. In terms of biological role, part of the DNA-dependent RNA polymerase which catalyzes the transcription of viral DNA into RNA using the four ribonucleoside triphosphates as substrates. Responsible for the transcription of early, intermediate and late genes. DNA-dependent RNA polymerase associates with the early transcription factor (ETF), itself composed of D6 and A7, thereby allowing the early genes transcription. Late transcription, and probably also intermediate transcription, require newly synthesized RNA polymerase. The sequence is that of DNA-directed RNA polymerase 133 kDa polypeptide (RPO132) from Homo sapiens (Human).